The primary structure comprises 165 residues: Protein OPG091 (165 aa).

It belongs to the orthopoxvirus OPG091 family.

Its subcellular location is the virion. It is found in the host cytoplasm. In terms of biological role, contributes to vaccinia virus virulence in mice but not to replication in cell culture. This is Protein OPG091 (OPG091) from Vaccinia virus (strain Western Reserve) (VACV).